Here is a 223-residue protein sequence, read N- to C-terminus: Neurotrophic factor BDNF precursor form (223 aa).

The first 5 residues, 1–5 (SCMKA), serve as a signal peptide directing secretion. The propeptide occupies 6–114 (APMKEVSIRG…AANMSMRVRR (109 aa)). N107 is a glycosylation site (N-linked (GlcNAc...) asparagine). Cystine bridges form between C127/C194 and C172/C223.

Belongs to the NGF-beta family.

It localises to the secreted. In terms of biological role, promotes the survival of neuronal populations that are all located either in the central nervous system or directly connected to it. The chain is Neurotrophic factor BDNF precursor form (BDNF) from Eryx colubrinus colubrinus.